Here is an 812-residue protein sequence, read N- to C-terminus: Eukaryotic translation initiation factor 3 subunit C (812 aa).

The segment at 1–105 is disordered; that stretch reads MSRFFSRGYH…SDESDDEGKK (105 aa). 2 stretches are compositionally biased toward acidic residues: residues 17 to 40 and 48 to 59; these read SEDEELLTSSEEELMSSSEEEVVS and SESESAESDDDS. The PCI domain occupies 607–783; sequence FHQHINLDLI…EMLIFDKGDE (177 aa).

The protein belongs to the eIF-3 subunit C family. Component of the eukaryotic translation initiation factor 3 (eIF-3) complex.

Its subcellular location is the cytoplasm. Functionally, component of the eukaryotic translation initiation factor 3 (eIF-3) complex, which is involved in protein synthesis of a specialized repertoire of mRNAs and, together with other initiation factors, stimulates binding of mRNA and methionyl-tRNAi to the 40S ribosome. The eIF-3 complex specifically targets and initiates translation of a subset of mRNAs involved in cell proliferation. This Eremothecium gossypii (strain ATCC 10895 / CBS 109.51 / FGSC 9923 / NRRL Y-1056) (Yeast) protein is Eukaryotic translation initiation factor 3 subunit C.